The primary structure comprises 137 residues: Large ribosomal subunit protein uL16c (137 aa).

The protein belongs to the universal ribosomal protein uL16 family. Part of the 50S ribosomal subunit.

Its subcellular location is the plastid. This is Large ribosomal subunit protein uL16c from Cuscuta exaltata (Tall dodder).